Here is a 147-residue protein sequence, read N- to C-terminus: Interleukin-4 (147 aa).

The N-terminal stretch at 1 to 24 is a signal peptide; that stretch reads MGLSPHLAVTLFCFLICTGNGIHG. Cysteines 47 and 87 form a disulfide. N-linked (GlcNAc...) asparagine glycosylation is found at Asn-61, Asn-90, and Asn-117.

It belongs to the IL-4/IL-13 family.

Its subcellular location is the secreted. In terms of biological role, participates in at least several B-cell activation processes as well as of other cell types. It is a costimulator of DNA-synthesis. It induces the expression of class II MHC molecules on resting B-cells. It enhances both secretion and cell surface expression of IgE and IgG1. It also regulates the expression of the low affinity Fc receptor for IgE (CD23) on both lymphocytes and monocytes. Positively regulates IL31RA expression in macrophages. Stimulates autophagy in dendritic cells by interfering with mTORC1 signaling and through the induction of RUFY4. The chain is Interleukin-4 (Il4) from Rattus norvegicus (Rat).